The primary structure comprises 221 residues: MHRVAVVTLRGYREWTESLGPRREHIIQRVQAGLHMALWRHFTSIGAFPHHTRYDAAVALVNNIPTTLIEKAVDKLKKASPVPVEYCIGTGPTPYEAYLSCGEAAGDGDNYAVLAHMDMVDSTHVTRANGPLHVYLQILHIISDLGDLCKRLGCIALYLGGDNVAVLLPEPKAAYEIAERVPVPVRVGVGVAKRPYTAFVKATKALDYLRSHGVVGVKVLK.

The protein belongs to the archaeal-type GTP cyclohydrolase family.

It catalyses the reaction GTP + 3 H2O = 2-amino-5-formylamino-6-(5-phospho-D-ribosylamino)pyrimidin-4(3H)-one + 2 phosphate + 2 H(+). Functionally, catalyzes the formation of 2-amino-5-formylamino-6-ribofuranosylamino-4(3H)-pyrimidinone ribonucleotide monophosphate and inorganic phosphate from GTP. Also has an independent pyrophosphate phosphohydrolase activity. The chain is GTP cyclohydrolase III from Pyrobaculum calidifontis (strain DSM 21063 / JCM 11548 / VA1).